The primary structure comprises 295 residues: Probable protein phosphatase 2C 5 (295 aa).

The PPM-type phosphatase domain maps to 23-294 (QYAATHMQGW…DNMTCILVLF (272 aa)). Aspartate 57 and glycine 58 together coordinate Mn(2+). The interval 151–170 (NRDGKPFDMSKDHKPDDDQE) is disordered. Residues aspartate 237 and aspartate 285 each contribute to the Mn(2+) site.

It belongs to the PP2C family. It depends on Mg(2+) as a cofactor. Requires Mn(2+) as cofactor.

It is found in the membrane. The enzyme catalyses O-phospho-L-seryl-[protein] + H2O = L-seryl-[protein] + phosphate. The catalysed reaction is O-phospho-L-threonyl-[protein] + H2O = L-threonyl-[protein] + phosphate. Its function is as follows. Enzyme with a broad specificity. The chain is Probable protein phosphatase 2C 5 from Paramecium tetraurelia.